The primary structure comprises 226 residues: SPI-1 type 3 secretion system stator protein (226 aa).

As to quaternary structure, the core secretion machinery of the T3SS is composed of approximately 20 different proteins, including cytoplasmic components, a base, an export apparatus and a needle. This subunit is part of the cytosolic complex. Interacts directly with InvC/SctN1 (T3SS-1 ATPase) and SpaO/SctQ (the major sorting platform component).

It localises to the cytoplasm. Functionally, component of the type III secretion system (T3SS), also called injectisome, which is used to inject bacterial effector proteins into eukaryotic host cells. Acts as a regulator of the InvC/SctN1 ATPase activity. Required for invasion and secretion. This chain is SPI-1 type 3 secretion system stator protein, found in Salmonella typhimurium (strain SL1344).